Reading from the N-terminus, the 1064-residue chain is Isoleucine--tRNA ligase, cytoplasmic (1064 aa).

The short motif at 42–52 (PFATGRPHHGH) is the 'HIGH' region element. The 'KMSKS' region motif lies at 597–601 (KMSKR). ATP is bound at residue K600.

It belongs to the class-I aminoacyl-tRNA synthetase family.

Its subcellular location is the cytoplasm. It catalyses the reaction tRNA(Ile) + L-isoleucine + ATP = L-isoleucyl-tRNA(Ile) + AMP + diphosphate. The protein is Isoleucine--tRNA ligase, cytoplasmic (irs1) of Schizosaccharomyces pombe (strain 972 / ATCC 24843) (Fission yeast).